A 302-amino-acid chain; its full sequence is Sulfate adenylyltransferase subunit 2 (302 aa).

This sequence belongs to the PAPS reductase family. CysD subfamily. In terms of assembly, heterodimer composed of CysD, the smaller subunit, and CysN.

It catalyses the reaction sulfate + ATP + H(+) = adenosine 5'-phosphosulfate + diphosphate. It participates in sulfur metabolism; hydrogen sulfide biosynthesis; sulfite from sulfate: step 1/3. With CysN forms the ATP sulfurylase (ATPS) that catalyzes the adenylation of sulfate producing adenosine 5'-phosphosulfate (APS) and diphosphate, the first enzymatic step in sulfur assimilation pathway. APS synthesis involves the formation of a high-energy phosphoric-sulfuric acid anhydride bond driven by GTP hydrolysis by CysN coupled to ATP hydrolysis by CysD. This is Sulfate adenylyltransferase subunit 2 from Salmonella agona (strain SL483).